The primary structure comprises 430 residues: Glutamyl-tRNA reductase 1 (430 aa).

Substrate-binding positions include 49 to 52 (TCNR), S109, 114 to 116 (EGQ), and Q120. C50 serves as the catalytic Nucleophile. 189-194 (GAGSMA) contributes to the NADP(+) binding site.

It belongs to the glutamyl-tRNA reductase family. In terms of assembly, homodimer.

The catalysed reaction is (S)-4-amino-5-oxopentanoate + tRNA(Glu) + NADP(+) = L-glutamyl-tRNA(Glu) + NADPH + H(+). It functions in the pathway porphyrin-containing compound metabolism; protoporphyrin-IX biosynthesis; 5-aminolevulinate from L-glutamyl-tRNA(Glu): step 1/2. Its function is as follows. Catalyzes the NADPH-dependent reduction of glutamyl-tRNA(Glu) to glutamate 1-semialdehyde (GSA). In Nocardioides sp. (strain ATCC BAA-499 / JS614), this protein is Glutamyl-tRNA reductase 1.